The sequence spans 475 residues: L-seryl-tRNA(Sec) selenium transferase (475 aa).

N6-(pyridoxal phosphate)lysine is present on Lys295.

It belongs to the SelA family. Pyridoxal 5'-phosphate serves as cofactor.

It localises to the cytoplasm. The catalysed reaction is L-seryl-tRNA(Sec) + selenophosphate + H(+) = L-selenocysteinyl-tRNA(Sec) + phosphate. Its pathway is aminoacyl-tRNA biosynthesis; selenocysteinyl-tRNA(Sec) biosynthesis; selenocysteinyl-tRNA(Sec) from L-seryl-tRNA(Sec) (bacterial route): step 1/1. In terms of biological role, converts seryl-tRNA(Sec) to selenocysteinyl-tRNA(Sec) required for selenoprotein biosynthesis. The protein is L-seryl-tRNA(Sec) selenium transferase of Desulfovibrio desulfuricans (strain ATCC 27774 / DSM 6949 / MB).